Reading from the N-terminus, the 293-residue chain is Polyamine aminopropyltransferase (293 aa).

One can recognise a PABS domain in the interval 10-244 (HIWFTEYHNN…GFWSFTLASK (235 aa)). S-methyl-5'-thioadenosine is bound at residue glutamine 39. Spermidine is bound by residues histidine 70 and aspartate 94. S-methyl-5'-thioadenosine is bound by residues glutamate 114 and 145–146 (DG). The active-site Proton acceptor is aspartate 163. 163–166 (DCPD) is a binding site for spermidine. Proline 170 is an S-methyl-5'-thioadenosine binding site.

It belongs to the spermidine/spermine synthase family. Homodimer or homotetramer.

The protein localises to the cytoplasm. The enzyme catalyses S-adenosyl 3-(methylsulfanyl)propylamine + putrescine = S-methyl-5'-thioadenosine + spermidine + H(+). Its pathway is amine and polyamine biosynthesis; spermidine biosynthesis; spermidine from putrescine: step 1/1. Catalyzes the irreversible transfer of a propylamine group from the amino donor S-adenosylmethioninamine (decarboxy-AdoMet) to putrescine (1,4-diaminobutane) to yield spermidine. This Methanocaldococcus jannaschii (strain ATCC 43067 / DSM 2661 / JAL-1 / JCM 10045 / NBRC 100440) (Methanococcus jannaschii) protein is Polyamine aminopropyltransferase.